The following is a 468-amino-acid chain: Cell division protein FtsA (468 aa).

Positions 416 to 468 are disordered; sequence NKKDTHENEVESSDEEIYQSEDNHQEHKQNHEHVQDKDKEESKFKKLMKSLFE. Residues 425–434 are compositionally biased toward acidic residues; it reads VESSDEEIYQ. The span at 436–459 shows a compositional bias: basic and acidic residues; it reads EDNHQEHKQNHEHVQDKDKEESKF.

It belongs to the FtsA/MreB family. Self-interacts. Interacts with FtsZ.

Its subcellular location is the cell membrane. In terms of biological role, cell division protein that is involved in the assembly of the Z ring. May serve as a membrane anchor for the Z ring. In Staphylococcus aureus (strain MRSA252), this protein is Cell division protein FtsA.